The chain runs to 273 residues: uncharacterized protein (273 aa).

The N-terminal stretch at 1-21 (MKILRWLFALVMLIATTEAMA) is a signal peptide.

This sequence to S.typhimurium YadU.

Its function is as follows. Part of the yfcOPQRSUV fimbrial operon. Could contribute to adhesion to various surfaces in specific environmental niches. Increases adhesion to eukaryotic T24 bladder epithelial cells in the absence of fim genes. This is an uncharacterized protein from Escherichia coli (strain K12).